Here is a 407-residue protein sequence, read N- to C-terminus: Phosphopentomutase (407 aa).

Mn(2+)-binding residues include Asp-11, Asp-305, His-310, Asp-346, His-347, and His-358.

The protein belongs to the phosphopentomutase family. Mn(2+) is required as a cofactor.

It localises to the cytoplasm. The catalysed reaction is 2-deoxy-alpha-D-ribose 1-phosphate = 2-deoxy-D-ribose 5-phosphate. The enzyme catalyses alpha-D-ribose 1-phosphate = D-ribose 5-phosphate. It participates in carbohydrate degradation; 2-deoxy-D-ribose 1-phosphate degradation; D-glyceraldehyde 3-phosphate and acetaldehyde from 2-deoxy-alpha-D-ribose 1-phosphate: step 1/2. Its function is as follows. Isomerase that catalyzes the conversion of deoxy-ribose 1-phosphate (dRib-1-P) and ribose 1-phosphate (Rib-1-P) to deoxy-ribose 5-phosphate (dRib-5-P) and ribose 5-phosphate (Rib-5-P), respectively. The chain is Phosphopentomutase from Legionella pneumophila (strain Paris).